The following is a 32-amino-acid chain: Fibrinolytic enzyme 2 (32 aa).

One can recognise a Peptidase S8 domain in the interval isoleucine 1 to arginine 32. The active-site Charge relay system is serine 5.

It belongs to the peptidase S8 family.

Inhibited by PMSF. Not inhibited by benzamidine, aprotinin, SBTI, EDTA, EGTA, 2-mercaptoethanol, iodoacetic acid or pepstatin A. In terms of biological role, serine protease. Has fibrinolytic and fibrinogenolytic but no plasminogenolytic activity. Cleaves after Arg and Lys residues. Cleaves fibrinogen alpha chain, beta chain and gamma chain in that order. The chain is Fibrinolytic enzyme 2 from Hediste japonica (Polychaete worm).